A 232-amino-acid polypeptide reads, in one-letter code: 5'-methylthioadenosine/S-adenosylhomocysteine nucleosidase (232 aa).

Glu-12 functions as the Proton acceptor in the catalytic mechanism. Substrate-binding positions include Gly-78, Ile-152, and 173–174 (ME). Residue Asp-197 is the Proton donor of the active site.

This sequence belongs to the PNP/UDP phosphorylase family. MtnN subfamily. As to quaternary structure, homodimer.

The enzyme catalyses S-adenosyl-L-homocysteine + H2O = S-(5-deoxy-D-ribos-5-yl)-L-homocysteine + adenine. It carries out the reaction S-methyl-5'-thioadenosine + H2O = 5-(methylsulfanyl)-D-ribose + adenine. The catalysed reaction is 5'-deoxyadenosine + H2O = 5-deoxy-D-ribose + adenine. Its pathway is amino-acid biosynthesis; L-methionine biosynthesis via salvage pathway; S-methyl-5-thio-alpha-D-ribose 1-phosphate from S-methyl-5'-thioadenosine (hydrolase route): step 1/2. Functionally, catalyzes the irreversible cleavage of the glycosidic bond in both 5'-methylthioadenosine (MTA) and S-adenosylhomocysteine (SAH/AdoHcy) to adenine and the corresponding thioribose, 5'-methylthioribose and S-ribosylhomocysteine, respectively. Also cleaves 5'-deoxyadenosine, a toxic by-product of radical S-adenosylmethionine (SAM) enzymes, into 5-deoxyribose and adenine. Thus, is required for in vivo function of the radical SAM enzymes biotin synthase and lipoic acid synthase, that are inhibited by 5'-deoxyadenosine accumulation. This is 5'-methylthioadenosine/S-adenosylhomocysteine nucleosidase from Enterobacter sp. (strain 638).